A 109-amino-acid chain; its full sequence is Small ribosomal subunit protein uS17A (109 aa).

This sequence belongs to the universal ribosomal protein uS17 family. In terms of assembly, part of the 30S ribosomal subunit.

Its function is as follows. One of the primary rRNA binding proteins, it binds specifically to the 5'-end of 16S ribosomal RNA. This is Small ribosomal subunit protein uS17A from Methanosarcina acetivorans (strain ATCC 35395 / DSM 2834 / JCM 12185 / C2A).